The sequence spans 750 residues: Retron Eco8 OLD nuclease (750 aa).

The tract at residues 1–173 is ATPase domain N-terminus; that stretch reads MTIESIRVKN…IDLYDWNPIW (173 aa). 33–37 is an ATP binding site; that stretch reads NVGKS. The tract at residues 174–260 is dimerization domain; the sequence is KLISNLNSFN…TQSDGTNSNK (87 aa). The tract at residues 261-390 is ATPase domain C-terminus; it reads FLETLLHLLI…FSDNEARLFF (130 aa). The tract at residues 391-704 is toprim domain; it reads SEYIVFVEGA…SGWVTTFLNY (314 aa). A divalent metal cation-binding residues include E398, E402, D450, D452, S623, and E641.

The protein belongs to the class 1 OLD nuclease family. As to quaternary structure, homodimer. It depends on a divalent metal cation as a cofactor.

Functionally, probable nuclease member of antiviral defense system retron Eco8, composed of an reverse transcriptase (RT), this nuclease and a non-coding RNA (ncRNA) encoded between them. Expression of retron Eco8 confers protection against bacteriophages T4, T6, T7 and SECphi4, SECphi6 and SECphi18. At multiplicity of infection (MOI) of 0.02 cultures slow growth when infected with SECphi4 but do not collapse, at MOI 2 cultures collapse. When the retron is cloned in another E.coli strain synthesizes msDNA (a branched RNA linked by a 2',5'-phosphodiester bond to a single-stranded DNA). The retron transcript serves as primer and template to the reaction, and codes for the RT. The chain is Retron Eco8 OLD nuclease from Escherichia coli.